The primary structure comprises 121 residues: Small ribosomal subunit protein bS6m (121 aa).

Belongs to the bacterial ribosomal protein bS6 family. As to quaternary structure, component of the mitochondrial ribosome small subunit (28S) which comprises a 12S rRNA and about 30 distinct proteins.

The protein resides in the mitochondrion. This chain is Small ribosomal subunit protein bS6m (MRPS6), found in Gallus gallus (Chicken).